Consider the following 364-residue polypeptide: MLIFPLINDTSRKIIHIDMDAFFAAVEERDNPALKGKPVVIGKDPRETGGRGVVSTCNYEARKYGIHSAMSSKEAYERCPKAIFISGNYEKYRTVGDQIRRIFKRYTDVVEPMSIDEAYLDVTDNKLGIKSAVKIAKLIQHDIWKEVGLTCSAGVSYNKFLAKLASDFEKPHGLTLVLKEDALCFLAKLPIEKFHGVGKKSVEKLHDMGIYTGQDLLAVPEMTLIDHFGRFGFDLYRKARGISNSPVKSDRIRKSIGSERTYAKLLYQETDIKAEISKNAKRVAALLQDHKKLGKTIVLKVRYADFTTLTKRVTLPELTRNAAQIEQVAGDIFDSLSENPAGIRLLGVTMTNLEDKVADISLDL.

The UmuC domain maps to 14–198; sequence IIHIDMDAFF…LPIEKFHGVG (185 aa). Mg(2+) contacts are provided by aspartate 18 and aspartate 116. Glutamate 117 is an active-site residue.

It belongs to the DNA polymerase type-Y family. Monomer. Requires Mg(2+) as cofactor.

The protein localises to the cytoplasm. It catalyses the reaction DNA(n) + a 2'-deoxyribonucleoside 5'-triphosphate = DNA(n+1) + diphosphate. Its function is as follows. Poorly processive, error-prone DNA polymerase involved in untargeted mutagenesis. Copies undamaged DNA at stalled replication forks, which arise in vivo from mismatched or misaligned primer ends. These misaligned primers can be extended by PolIV. Exhibits no 3'-5' exonuclease (proofreading) activity. May be involved in translesional synthesis, in conjunction with the beta clamp from PolIII. The protein is DNA polymerase IV of Streptococcus pyogenes serotype M2 (strain MGAS10270).